The sequence spans 593 residues: UvrABC system protein C (593 aa).

The GIY-YIG domain maps to 14 to 91 (DSPGCYLHKD…IQENMPKYNI (78 aa)). One can recognise a UVR domain in the interval 196 to 231 (NKIVNGLTEKMKSAAMTMEFERAAEYRDLIEAISLL).

This sequence belongs to the UvrC family. In terms of assembly, interacts with UvrB in an incision complex.

Its subcellular location is the cytoplasm. The UvrABC repair system catalyzes the recognition and processing of DNA lesions. UvrC both incises the 5' and 3' sides of the lesion. The N-terminal half is responsible for the 3' incision and the C-terminal half is responsible for the 5' incision. In Streptococcus agalactiae serotype III (strain NEM316), this protein is UvrABC system protein C.